The primary structure comprises 436 residues: Trigger factor (436 aa).

Residues 161 to 246 form the PPIase FKBP-type domain; the sequence is EDQLNIDFVG…VNTVSEPKLP (86 aa).

This sequence belongs to the FKBP-type PPIase family. Tig subfamily.

The protein localises to the cytoplasm. It carries out the reaction [protein]-peptidylproline (omega=180) = [protein]-peptidylproline (omega=0). Functionally, involved in protein export. Acts as a chaperone by maintaining the newly synthesized protein in an open conformation. Functions as a peptidyl-prolyl cis-trans isomerase. The sequence is that of Trigger factor from Pseudomonas savastanoi pv. phaseolicola (strain 1448A / Race 6) (Pseudomonas syringae pv. phaseolicola (strain 1448A / Race 6)).